Consider the following 329-residue polypeptide: Mitochondrial glycine transporter (329 aa).

Solcar repeat units follow at residues 19-103, 130-214, and 232-316; these read SKTT…LRQP, LSNW…LKRH, and SSSS…LILR. 6 helical membrane-spanning segments follow: residues 25 to 50, 78 to 104, 136 to 161, 189 to 212, 236 to 262, and 291 to 309; these read FAAGLCSGLTSSILLQPADLLKTRVQ, GTLPSALRTGFGSALYFTTLNALRQPL, LGTGAVARVAAGFVMMPVTVIKVRYE, GFGATAARDAPYAGLYVLFYEQLK, INFISGGLAAGLATTITNPFDAVKTRL, and GLGLRITRKALSSALAWTV.

This sequence belongs to the mitochondrial carrier (TC 2.A.29) family. SLC25A38 subfamily.

It localises to the mitochondrion inner membrane. The catalysed reaction is glycine(in) = glycine(out). Its function is as follows. Mitochondrial glycine transporter that imports glycine into the mitochondrial matrix. Plays an important role in providing glycine for the first enzymatic step in heme biosynthesis, the condensation of glycine with succinyl-CoA to produce 5-aminolevulinate (ALA) in the mitochondrial matrix. This is Mitochondrial glycine transporter from Aspergillus terreus (strain NIH 2624 / FGSC A1156).